We begin with the raw amino-acid sequence, 450 residues long: Endosomal transmembrane epsin interactor 1 (450 aa).

The signal sequence occupies residues 1-29 (MILLVNLFVLLSVVCVLLNLAGFILGCQG). At 30-85 (AQFVSSVPRCDLVDLGEGKICFCCEEFQPAKCTDKENALKLFPVQPCSAVHLLLKK) the chain is on the lumenal side. The helical transmembrane segment at 86-106 (VLFALCALNALTTTVCLVAAA) threads the bilayer. Residues 107–450 (LRYLQIFATR…LIGVIRETVL (344 aa)) lie on the Cytoplasmic side of the membrane. The tract at residues 107 to 450 (LRYLQIFATR…LIGVIRETVL (344 aa)) is mediates interaction with EPN1. 2 consecutive short sequence motifs (PPxY; mediates interaction with ITCH) follow at residues 148-151 (PPSY) and 194-197 (PPPY). A disordered region spans residues 235-284 (DGDIPNIPAEENASTSTPSSTLVRPIRSRRALPPLRTRSKSDPVLHPSEE). Residues 246-256 (NASTSTPSSTL) show a composition bias toward polar residues. Residues 273-284 (SKSDPVLHPSEE) are compositionally biased toward basic and acidic residues. Lys274 participates in a covalent cross-link: Glycyl lysine isopeptide (Lys-Gly) (interchain with G-Cter in ubiquitin). A Phosphoserine modification is found at Ser275. Glycyl lysine isopeptide (Lys-Gly) (interchain with G-Cter in ubiquitin) cross-links involve residues Lys329 and Lys365.

It belongs to the ENTREP family. Interacts with ITCH; enhances the ubiquitination of CXCR4 by ITCH and the subsequent endocytosis and desensitization of the receptor. Interacts with EPN1. Monoubiquitinated at Lys-274, Lys-329 and Lys-365 by ITCH. As to expression, prominently expressed in muscle.

It is found in the early endosome membrane. It localises to the late endosome membrane. The protein resides in the recycling endosome membrane. Its subcellular location is the cell membrane. Functions as an activator of the E3 ubiquitin protein ligase ITCH in the ubiquitination of the CXCL12-activated CXCR4 receptor. Thereby, triggers CXCR4 endocytosis and desensitization, negatively regulating the CXCL12/CXCR4 signaling pathway. The protein is Endosomal transmembrane epsin interactor 1 of Homo sapiens (Human).